Consider the following 119-residue polypeptide: Large ribosomal subunit protein bL20 (119 aa).

It belongs to the bacterial ribosomal protein bL20 family.

Binds directly to 23S ribosomal RNA and is necessary for the in vitro assembly process of the 50S ribosomal subunit. It is not involved in the protein synthesizing functions of that subunit. This Clostridium botulinum (strain ATCC 19397 / Type A) protein is Large ribosomal subunit protein bL20.